Here is a 396-residue protein sequence, read N- to C-terminus: S-adenosylmethionine synthase (396 aa).

An ATP-binding site is contributed by histidine 16. Aspartate 18 is a binding site for Mg(2+). Glutamate 44 lines the K(+) pocket. Residues glutamate 57 and glutamine 100 each coordinate L-methionine. Residues 100-110 form a flexible loop region; it reads QSQDIARGVDN. Residues 162-164, aspartate 237, 243-244, alanine 260, and lysine 264 each bind ATP; these read DGK and RK. Aspartate 237 contributes to the L-methionine binding site. Lysine 268 contacts L-methionine.

This sequence belongs to the AdoMet synthase family. Homotetramer; dimer of dimers. Mg(2+) is required as a cofactor. K(+) serves as cofactor.

It is found in the cytoplasm. It catalyses the reaction L-methionine + ATP + H2O = S-adenosyl-L-methionine + phosphate + diphosphate. It participates in amino-acid biosynthesis; S-adenosyl-L-methionine biosynthesis; S-adenosyl-L-methionine from L-methionine: step 1/1. In terms of biological role, catalyzes the formation of S-adenosylmethionine (AdoMet) from methionine and ATP. The overall synthetic reaction is composed of two sequential steps, AdoMet formation and the subsequent tripolyphosphate hydrolysis which occurs prior to release of AdoMet from the enzyme. In Myxococcus xanthus, this protein is S-adenosylmethionine synthase.